Reading from the N-terminus, the 574-residue chain is E3 ubiquitin-protein ligase TRIM23 (574 aa).

The segment at Cys31–Arg76 adopts an RING-type; degenerate zinc-finger fold. A B box-type; degenerate zinc finger spans residues Glu122–Leu168. A coiled-coil region spans residues Arg352–Asp379. Positions Thr390–Ala574 are ARF-like. Residues Gly411–Thr418, Asp454–Lys458, and Asn513–Asp516 each bind GTP.

In the C-terminal section; belongs to the small GTPase superfamily. Arf family. In terms of assembly, homodimer. Interacts with PSCD1. Interacts with UBE2D2. Interacts with TBK1 (via N-terminal kinase domain) and p62/SQSTM1. As to quaternary structure, (Microbial infection) Interacts with human cytomegalovirus protein UL144; this interaction might cause autoubiquitination of TRAF6, leading to NF-kappa-B activation.

The protein resides in the cytoplasm. It localises to the endomembrane system. The protein localises to the golgi apparatus membrane. It is found in the lysosome membrane. It catalyses the reaction S-ubiquitinyl-[E2 ubiquitin-conjugating enzyme]-L-cysteine + [acceptor protein]-L-lysine = [E2 ubiquitin-conjugating enzyme]-L-cysteine + N(6)-ubiquitinyl-[acceptor protein]-L-lysine.. It functions in the pathway protein modification; protein ubiquitination. Acts as an E3 ubiquitin-protein ligase. Plays an essential role in autophagy activation during viral infection. Mechanistically, activates TANK-binding kinase 1/TBK1 by facilitating its dimerization and ability to phosphorylate the selective autophagy receptor SQSTM1. In order to achieve this function, TRIM23 mediates 'Lys-27'-linked auto-ubiquitination of its ADP-ribosylation factor (ARF) domain to induce its GTPase activity and its recruitment to autophagosomes. In terms of biological role, (Microbial infection) Mediates TRAF6 auto-ubiquitination in the presence of human cytomegalovirus protein UL144, resulting in the virally controlled activation of NF-kappa-B stimulation at early times of HCMV infection. In Homo sapiens (Human), this protein is E3 ubiquitin-protein ligase TRIM23 (TRIM23).